Here is a 462-residue protein sequence, read N- to C-terminus: Sensor histidine kinase RegB (462 aa).

Residues Met-1 to Leu-25 lie on the Cytoplasmic side of the membrane. Residues Leu-26–Leu-45 traverse the membrane as a helical segment. The Extracellular segment spans residues Gly-46–Met-51. A helical membrane pass occupies residues Gly-52 to Phe-70. The Cytoplasmic portion of the chain corresponds to Val-71–Leu-78. A helical transmembrane segment spans residues Thr-79–Phe-96. The Extracellular portion of the chain corresponds to Leu-97–Gly-103. A helical membrane pass occupies residues Leu-104–Leu-123. Topologically, residues Glu-124 to Val-129 are cytoplasmic. Residues Ile-130–Leu-149 traverse the membrane as a helical segment. Topologically, residues Ile-150–Glu-164 are extracellular. The chain crosses the membrane as a helical span at residues Phe-165–Ser-182. The Cytoplasmic segment spans residues Arg-183–Thr-462. The 228-residue stretch at Ala-218–Arg-445 folds into the Histidine kinase domain. His-221 is subject to Phosphohistidine; by autocatalysis.

Its subcellular location is the cell inner membrane. It carries out the reaction ATP + protein L-histidine = ADP + protein N-phospho-L-histidine.. In terms of biological role, member of the two-component regulatory system RegB/RegA. Involved in the positive regulation of photosynthesis gene expression in response to anaerobiosis. Also involved in positive regulation of the cbbI and cbbII Calvin cycle CO2 fixation operons, as well as in regulation of expression of genes involved in alternative CO2 fixation pathways. Phosphorylates RegA/PrrA. In Cereibacter sphaeroides (strain ATCC 17023 / DSM 158 / JCM 6121 / CCUG 31486 / LMG 2827 / NBRC 12203 / NCIMB 8253 / ATH 2.4.1.) (Rhodobacter sphaeroides), this protein is Sensor histidine kinase RegB (regB).